Reading from the N-terminus, the 335-residue chain is Nuclear envelope-associated protein 2 (335 aa).

Coiled coils occupy residues 55 to 85 (RKEAEKKAKNMEMEICKLQKKLEDRNCELVA) and 125 to 260 (CSVL…LKKK). The Bipartite nuclear localization signal signature appears at 239-260 (KTKELESQLERQRRADQELKKK). Residues 312 to 329 (FWDTSGFKIVVSMSMLIL) form a helical membrane-spanning segment.

Forms homomers and heteromers with NEAP1 and NEAP3. Interacts with SUN1 and SUN2.

It localises to the nucleus inner membrane. The protein resides in the nucleus. Its subcellular location is the nucleoplasm. The protein is Nuclear envelope-associated protein 2 of Arabidopsis thaliana (Mouse-ear cress).